The chain runs to 341 residues: S-adenosylmethionine:tRNA ribosyltransferase-isomerase (341 aa).

The protein belongs to the QueA family. In terms of assembly, monomer.

The protein localises to the cytoplasm. The enzyme catalyses 7-aminomethyl-7-carbaguanosine(34) in tRNA + S-adenosyl-L-methionine = epoxyqueuosine(34) in tRNA + adenine + L-methionine + 2 H(+). Its pathway is tRNA modification; tRNA-queuosine biosynthesis. Functionally, transfers and isomerizes the ribose moiety from AdoMet to the 7-aminomethyl group of 7-deazaguanine (preQ1-tRNA) to give epoxyqueuosine (oQ-tRNA). This Acetivibrio thermocellus (strain ATCC 27405 / DSM 1237 / JCM 9322 / NBRC 103400 / NCIMB 10682 / NRRL B-4536 / VPI 7372) (Clostridium thermocellum) protein is S-adenosylmethionine:tRNA ribosyltransferase-isomerase.